We begin with the raw amino-acid sequence, 605 residues long: MALPGPAVFGPGSRGSLDEAGAEGREAAALAAAGVALEDEEEDDGRRGLLRWDGFSAWLHCVCVVGFDLELGQAVEVIYPQHSKLTDKEKTNICYLSFPDSNSGCLGDTQFCFRFRQSSGRRVSLHCLLDEFDKDLPVYLKKDPAYFYGYVYFRQVRDKTLKRGYFQKSLVLISKLPYIHFFHTVLKQIAPEYFEKNEPYLEAACNDVDRWPAPVPGKTLHLPIMGLVMKVRIPTCHDKPGTTQMVQLTQQADTHTSIILPTVHEVDLFRCFCPVFLHSQMLWELVLLGEPLVVMAPSPSESSETVLALVNCISPLKYFSDFRPYFTIHDSEFKEYTTRTQAPPSVILGVTNPFFAKTLQHWPHIIRIGDLKPAGEIPKQVKVKKLKNLKTLDSKPGVYTSYKPYLNRDEEIIKQLQKGIQQKRPSEAQSVILRRYFLELTQSFIIPLERYVASLMPLQKSISPWKSPPQLRQFLPEEFMKTLEKTGPQLTSGIKGDWIGLYRQFLKSPNFDGWFKTRRKEMTQKLEALHLEALCEEDLLLWIQKHTEVETVDLVLKLKNKLLQAGRESLPVKPDTVEKLRTHIDAIILALPDDLQGILLKTGMT.

The interval 1-20 is disordered; sequence MALPGPAVFGPGSRGSLDEA. Residues 60–239 form the uDENN domain; that stretch reads HCVCVVGFDL…KVRIPTCHDK (180 aa). Residue Ser-124 is modified to Phosphoserine. The 126-residue stretch at 265–390 folds into the cDENN domain; that stretch reads EVDLFRCFCP…VKVKKLKNLK (126 aa). The 134-residue stretch at 392–525 folds into the dDENN domain; it reads LDSKPGVYTS…KTRRKEMTQK (134 aa). Lys-507 bears the N6-methyllysine mark.

It belongs to the DENND6 family.

The protein resides in the recycling endosome. The protein localises to the cytoplasm. In terms of biological role, guanine nucleotide exchange factor (GEF) for RAB14. Component of an endocytic recycling pathway that is required for the control of ADAM10 transport, shedding of N-cadherin/CDH2 by ADAM9 or ADAM10 and regulation of cell-cell junctions. Required for RAB14 recruitment to recycling endosomes. This is Protein DENND6A (Dennd6a) from Mus musculus (Mouse).